The following is a 61-amino-acid chain: Small ribosomal subunit protein uS14 (61 aa).

Residues cysteine 24, cysteine 27, cysteine 40, and cysteine 43 each coordinate Zn(2+).

This sequence belongs to the universal ribosomal protein uS14 family. Zinc-binding uS14 subfamily. In terms of assembly, part of the 30S ribosomal subunit. Contacts proteins S3 and S10. Zn(2+) is required as a cofactor.

Binds 16S rRNA, required for the assembly of 30S particles and may also be responsible for determining the conformation of the 16S rRNA at the A site. The polypeptide is Small ribosomal subunit protein uS14 (Clostridium kluyveri (strain NBRC 12016)).